A 340-amino-acid chain; its full sequence is Glycerol-3-phosphate dehydrogenase [NAD(P)+] (340 aa).

Residues serine 11, tryptophan 12, arginine 33, and lysine 106 each coordinate NADPH. Residues lysine 106, glycine 137, and serine 139 each coordinate sn-glycerol 3-phosphate. Alanine 141 provides a ligand contact to NADPH. Sn-glycerol 3-phosphate-binding residues include lysine 192, aspartate 245, serine 255, arginine 256, and asparagine 257. The active-site Proton acceptor is the lysine 192. Arginine 256 contacts NADPH. Positions 280 and 282 each coordinate NADPH.

This sequence belongs to the NAD-dependent glycerol-3-phosphate dehydrogenase family.

The protein resides in the cytoplasm. The catalysed reaction is sn-glycerol 3-phosphate + NAD(+) = dihydroxyacetone phosphate + NADH + H(+). The enzyme catalyses sn-glycerol 3-phosphate + NADP(+) = dihydroxyacetone phosphate + NADPH + H(+). The protein operates within membrane lipid metabolism; glycerophospholipid metabolism. Catalyzes the reduction of the glycolytic intermediate dihydroxyacetone phosphate (DHAP) to sn-glycerol 3-phosphate (G3P), the key precursor for phospholipid synthesis. This Bacillus mycoides (strain KBAB4) (Bacillus weihenstephanensis) protein is Glycerol-3-phosphate dehydrogenase [NAD(P)+].